A 197-amino-acid polypeptide reads, in one-letter code: uncharacterized protein (197 aa).

A run of 6 helical transmembrane segments spans residues 11–31 (AAMV…IPLI), 50–70 (ILAI…AYLG), 79–99 (AIVA…GLFA), 108–128 (AIVA…LGIM), 136–156 (ALKG…FIGL), and 158–178 (TLQI…AFHF).

It belongs to the chromate ion transporter (CHR) (TC 2.A.51) family.

It is found in the cell membrane. This is an uncharacterized protein from Bacillus subtilis (strain 168).